Consider the following 514-residue polypeptide: 2,3-bisphosphoglycerate-independent phosphoglycerate mutase (514 aa).

Positions 12 and 62 each coordinate Mn(2+). Serine 62 (phosphoserine intermediate) is an active-site residue. Substrate is bound by residues histidine 123, arginine 153–aspartate 154, arginine 185, arginine 191, arginine 260–arginine 263, and lysine 335. Mn(2+) is bound by residues aspartate 402, histidine 406, aspartate 443, histidine 444, and histidine 462.

The protein belongs to the BPG-independent phosphoglycerate mutase family. In terms of assembly, monomer. Requires Mn(2+) as cofactor.

It carries out the reaction (2R)-2-phosphoglycerate = (2R)-3-phosphoglycerate. Its pathway is carbohydrate degradation; glycolysis; pyruvate from D-glyceraldehyde 3-phosphate: step 3/5. Its function is as follows. Catalyzes the interconversion of 2-phosphoglycerate and 3-phosphoglycerate. The protein is 2,3-bisphosphoglycerate-independent phosphoglycerate mutase of Lachnoclostridium phytofermentans (strain ATCC 700394 / DSM 18823 / ISDg) (Clostridium phytofermentans).